The primary structure comprises 814 residues: Origin of replication complex subunit 1 (814 aa).

The segment covering 1–15 (MDLSATPSRSKSGLR) has biased composition (polar residues). Residues 1 to 127 (MDLSATPSRS…PKKPKKRAYY (127 aa)) are disordered. Low complexity-rich tracts occupy residues 51–62 (APMSPVTPSSVR) and 69–80 (ETPTKVTSETPV). The Nuclear localization signal signature appears at 105–112 (PKRQRQRQ). A compositionally biased stretch (basic residues) spans 108–127 (QRQRQRQRQQPKKPKKRAYY). A histone H3 binding region spans residues 157–181 (DPEAEECRVCFRAGAAVMVECDVCL). The PHD-type zinc-finger motif lies at 160-209 (AEECRVCFRAGAAVMVECDVCLGGFHLRCVRPPLRRVPEGDWACPYCEAE). The Zn(2+) site is built by cysteine 163, cysteine 166, cysteine 177, cysteine 180, histidine 185, and cysteine 188. The interval 197–201 (PEGDW) is histone H3 binding. Zn(2+) contacts are provided by cysteine 203 and cysteine 206. The BAH domain maps to 218 to 335 (PKPPEGKRIV…IHWHNFKRLA (118 aa)). A histone H3 binding region spans residues 310-315 (ASDQGD). Composition is skewed to acidic residues over residues 339–349 (DEPETKEDPGD) and 360–373 (SDSD…EEEE). The tract at residues 339-384 (DEPETKEDPGDEPYNAGNDYVSDSDEDSEYDEEEEPTKCSSARTHQ) is disordered. Residues 433 to 804 (PKSLPCRDKE…DDVTFALKES (372 aa)) form a necessary and sufficient for ORC complex assembly region. ATP-binding positions include 468–475 (GVPGTGKT) and 468–476 (GVPGTGKTM). Residues aspartate 558 and glutamate 559 each coordinate Mg(2+). ATP contacts are provided by glutamate 559, asparagine 592, and arginine 657.

This sequence belongs to the ORC1 family. As to quaternary structure, component of the origin recognition complex (ORC) composed of at least ORC1, ORC2, ORC3, ORC4, ORC5 and ORC6. ORC is regulated in a cell-cycle and development dependent manner. It is sequentially assembled at the exit from anaphase of mitosis and disassembled as cells enter S phase. Binds unmodified and methylated histone H3. As to expression, expressed strongly in root tips and shoot apical meristem (SAM), and weakly in young leaves. Not detected in mature leaves.

The protein localises to the nucleus. Essential protein. Component of the origin recognition complex (ORC) that binds origins of replication. It has a role in both chromosomal replication and mating type transcriptional silencing. Binds to the ARS consensus sequence (ACS) of origins of replication. H3K4me3 effector that positively regulates the transcription of a subset of genes. Required for cell proliferation. The protein is Origin of replication complex subunit 1 of Oryza sativa subsp. japonica (Rice).